A 455-amino-acid chain; its full sequence is Rhodopsin (455 aa).

Residues 1-34 (MVESTTLVNQTWWYNPTVDIHPHWAKFDPIPDAV) are Extracellular-facing. N9 carries N-linked (GlcNAc...) asparagine glycosylation. Residues 35 to 59 (YYSVGIFIGVVGIIGILGNGVVIYL) form a helical membrane-spanning segment. The Cytoplasmic portion of the chain corresponds to 60–71 (FSKTKSLQTPAN). A helical membrane pass occupies residues 72–98 (MFIINLAMSDLSFSAINGFPLKTISAF). Residues 99–110 (MKKWIFGKVACQ) lie on the Extracellular side of the membrane. C109 and C187 are oxidised to a cystine. A helical transmembrane segment spans residues 111-132 (LYGLLGGIFGFMSINTMAMISI). The 'Ionic lock' involved in activated form stabilization motif lies at 133–135 (DRY). The Cytoplasmic segment spans residues 133 to 152 (DRYNVIGRPMAASKKMSHRR). Residues 153-173 (AFLMIIFVWMWSIVWSVGPVF) traverse the membrane as a helical segment. Residues 174–200 (NWGAYVPEGILTSCSFDYLSTDPSTRS) are Extracellular-facing. A helical transmembrane segment spans residues 201–225 (FILCMYFCGFMLPIIIIAFCYFNIV). The Cytoplasmic portion of the chain corresponds to 226–262 (MSVSNHEKEMAAMAKRLNAKELRKAQAGASAEMKLAK). The helical transmembrane segment at 263–284 (ISMVIITQFMLSWSPYAIIALL) threads the bilayer. The Extracellular portion of the chain corresponds to 285–294 (AQFGPAEWVT). The chain crosses the membrane as a helical span at residues 295-316 (PYAAELPVLFAKASAIHNPIVY). An N6-(retinylidene)lysine modification is found at K306. Topologically, residues 317–455 (SVSHPKFREA…QGVDNQAYQA (139 aa)) are cytoplasmic. S-palmitoyl cysteine attachment occurs at residues C337 and C338. A compositionally biased stretch (low complexity) spans 378-387 (QKMQAQQAAY). The disordered stretch occupies residues 378–455 (QKMQAQQAAY…QGVDNQAYQA (78 aa)). The segment covering 388–433 (QPPPPPQGYPPQGYPPQGAYPPPQGYPPQGYPPQGYPPQGYPPQGA) has biased composition (pro residues). Tandem repeats lie at residues 395–399 (GYPPQ), 400–404 (GYPPQ), 412–416 (GYPPQ), 417–421 (GYPPQ), 422–426 (GYPPQ), and 427–431 (GYPPQ). Residues 395–431 (GYPPQGYPPQGAYPPPQGYPPQGYPPQGYPPQGYPPQ) form a 6 X 5 AA repeats of G-Y-P-P-Q region.

This sequence belongs to the G-protein coupled receptor 1 family. Opsin subfamily. Contains one covalently linked retinal chromophore. Upon light absorption, the covalently bound 11-cis-retinal is converted to all-trans-retinal. After hydrolysis of the Schiff base and release of the covalently bound all-trans-retinal, active rhodopsin is regenerated by binding of a fresh molecule of 11-cis-retinal.

The protein resides in the cell projection. The protein localises to the rhabdomere membrane. Its function is as follows. Photoreceptor required for image-forming vision at low light intensity. Light-induced isomerization of 11-cis to all-trans retinal triggers a conformational change that activates signaling via G-proteins. Signaling mediates the activation of phospholipase C. Subsequent receptor phosphorylation mediates displacement of the bound G-protein alpha subunit by arrestin and terminates signaling. The sequence is that of Rhodopsin (RHO) from Enteroctopus dofleini (North Pacific giant octopus).